The primary structure comprises 702 residues: Polyribonucleotide nucleotidyltransferase (702 aa).

Residues Asp-485 and Asp-491 each contribute to the Mg(2+) site. Positions 552-612 (PRTEIICIDP…EGVKKAISII (61 aa)) constitute a KH domain. The 69-residue stretch at 622 to 690 (GEIYLGKVTK…NQGRINLSRK (69 aa)) folds into the S1 motif domain.

This sequence belongs to the polyribonucleotide nucleotidyltransferase family. Requires Mg(2+) as cofactor.

It is found in the cytoplasm. The enzyme catalyses RNA(n+1) + phosphate = RNA(n) + a ribonucleoside 5'-diphosphate. Its function is as follows. Involved in mRNA degradation. Catalyzes the phosphorolysis of single-stranded polyribonucleotides processively in the 3'- to 5'-direction. The sequence is that of Polyribonucleotide nucleotidyltransferase from Clostridium botulinum (strain Kyoto / Type A2).